Here is a 700-residue protein sequence, read N- to C-terminus: Methionine--tRNA ligase (700 aa).

The short motif at 12–22 is the 'HIGH' region element; the sequence is PYANGNFHIGH. Positions 143, 146, 156, and 159 each coordinate Zn(2+). The 'KMSKS' region signature appears at 348–352; the sequence is KMSKS. Position 351 (Lys-351) interacts with ATP. Positions 594 to 700 constitute a tRNA-binding domain; that stretch reads DFSKIDLRIA…AGAQPGMRVH (107 aa).

This sequence belongs to the class-I aminoacyl-tRNA synthetase family. MetG type 1 subfamily. As to quaternary structure, homodimer. Zn(2+) serves as cofactor.

The protein resides in the cytoplasm. It catalyses the reaction tRNA(Met) + L-methionine + ATP = L-methionyl-tRNA(Met) + AMP + diphosphate. Its function is as follows. Is required not only for elongation of protein synthesis but also for the initiation of all mRNA translation through initiator tRNA(fMet) aminoacylation. This is Methionine--tRNA ligase from Albidiferax ferrireducens (strain ATCC BAA-621 / DSM 15236 / T118) (Rhodoferax ferrireducens).